A 259-amino-acid chain; its full sequence is Tumor necrosis factor receptor superfamily member 10C (259 aa).

An N-terminal signal peptide occupies residues 1-25 (MARIPKTLKFVVVIVAVLLPVLAYS). TNFR-Cys repeat units lie at residues 29-66 (ARQEEVPQQTVAPQQQRHSFKGEECPAGSHRSEHTGAC), 69-109 (CTEG…DTVC), and 110-149 (QCKEGTFRNENSPEMCRKCSRCPSGEVQVSNCTSWDDIQC). Over residues 30 to 45 (RQEEVPQQTVAPQQQR) the composition is skewed to polar residues. The tract at residues 30–56 (RQEEVPQQTVAPQQQRHSFKGEECPAG) is disordered. 7 disulfides stabilise this stretch: cysteine 53–cysteine 66, cysteine 69–cysteine 85, cysteine 88–cysteine 101, cysteine 91–cysteine 109, cysteine 111–cysteine 125, cysteine 128–cysteine 141, and cysteine 131–cysteine 149. An N-linked (GlcNAc...) (high mannose) asparagine glycan is attached at asparagine 77. N-linked (GlcNAc...) (high mannose) asparagine glycosylation is found at asparagine 140 and asparagine 156. Residues 160 to 224 (ETPAAEETMN…TSPGTPAPAA (65 aa)) form a disordered region. TAPE repeat units follow at residues 162-176 (PAAEETMNTSPGTPA), 177-191 (PAAEETMNTSPGTPA), 192-206 (PAAEETMTTSPGTPA), 207-221 (PAAEETMTTSPGTPA), and 222-236 (PAAEETMITSPGTPA). A compositionally biased stretch (low complexity) spans 185–217 (TSPGTPAPAAEETMTTSPGTPAPAAEETMTTSP). A lipid anchor (GPI-anchor amidated alanine) is attached at alanine 236. Positions 237–259 (SSHYLSCTIVGIIVLIVLLIVFV) are cleaved as a propeptide — removed in mature form.

Post-translationally, N-glycosylated and O-glycosylated. Higher expression in normal tissues than in tumor cell lines. Highly expressed in peripheral blood lymphocytes, spleen, skeletal muscle, placenta, lung and heart.

Its subcellular location is the cell membrane. Receptor for the cytotoxic ligand TRAIL. Lacks a cytoplasmic death domain and hence is not capable of inducing apoptosis. May protect cells against TRAIL mediated apoptosis by competing with TRAIL-R1 and R2 for binding to the ligand. The chain is Tumor necrosis factor receptor superfamily member 10C (TNFRSF10C) from Homo sapiens (Human).